The chain runs to 1077 residues: Endo-1,4-beta-xylanase Y (1077 aa).

An N-terminal signal peptide occupies residues 1 to 26 (MKNKRVLAKITALVVLLGVFFVLPSN). The CBM-cenC 1 domain maps to 33-180 (DYEVVHDTFE…IFDDVTITRK (148 aa)). In terms of domain architecture, GH10 spans 189 to 538 (YAANAVLKDM…KPAYNAVASI (350 aa)). The active-site Proton donor is Glu337. Glu460 (nucleophile) is an active-site residue. The disordered stretch occupies residues 543–563 (EWGDGNNPAGGGGGGKPEEPD). The 150-residue stretch at 565–714 (NGYYYHDTFE…YIDEAIGAVA (150 aa)) folds into the CBM-cenC 2 domain. One can recognise a Dockerin domain in the interval 728 to 796 (PPVLLGDVNG…LLRVIDKFPV (69 aa)).

It belongs to the glycosyl hydrolase 10 (cellulase F) family.

It carries out the reaction Endohydrolysis of (1-&gt;4)-beta-D-xylosidic linkages in xylans.. The chain is Endo-1,4-beta-xylanase Y (xynY) from Acetivibrio thermocellus (Hungateiclostridium thermocellum).